A 508-amino-acid chain; its full sequence is NADH-quinone oxidoreductase subunit N 1 (508 aa).

Helical transmembrane passes span 2–22 (ILGP…GALL), 47–67 (ALGT…VGFV), 87–107 (FTLF…LLAG), 126–146 (FSTV…LFLG), 175–195 (FLLG…IYGA), 220–240 (ALLL…VSAV), 260–280 (FMAV…LLGA), 291–311 (AGWP…ANLI), 321–341 (MLAY…AATV), 351–371 (VMFY…TLIL), 396–416 (ALAF…AGFF), 431–453 (YTLS…RVLV), and 479–499 (LVVS…SLGI).

This sequence belongs to the complex I subunit 2 family. As to quaternary structure, NDH-1 is composed of 14 different subunits. Subunits NuoA, H, J, K, L, M, N constitute the membrane sector of the complex.

It is found in the cell inner membrane. It catalyses the reaction a quinone + NADH + 5 H(+)(in) = a quinol + NAD(+) + 4 H(+)(out). Functionally, NDH-1 shuttles electrons from NADH, via FMN and iron-sulfur (Fe-S) centers, to quinones in the respiratory chain. The immediate electron acceptor for the enzyme in this species is believed to be ubiquinone. Couples the redox reaction to proton translocation (for every two electrons transferred, four hydrogen ions are translocated across the cytoplasmic membrane), and thus conserves the redox energy in a proton gradient. The protein is NADH-quinone oxidoreductase subunit N 1 of Sorangium cellulosum (strain So ce56) (Polyangium cellulosum (strain So ce56)).